The primary structure comprises 459 residues: Asparagine--tRNA ligase (459 aa).

The protein belongs to the class-II aminoacyl-tRNA synthetase family. In terms of assembly, homodimer.

It localises to the cytoplasm. It carries out the reaction tRNA(Asn) + L-asparagine + ATP = L-asparaginyl-tRNA(Asn) + AMP + diphosphate + H(+). The polypeptide is Asparagine--tRNA ligase (Pelobacter propionicus (strain DSM 2379 / NBRC 103807 / OttBd1)).